Consider the following 353-residue polypeptide: Diacetylchitobiose uptake system permease protein NgcF (353 aa).

The tract at residues 1-24 (MKDTIPTAETASRRPEPAARGGRP) is disordered. A run of 6 helical transmembrane segments spans residues 36-56 (FFLA…LIPF), 100-120 (LLAA…AVAI), 141-161 (IISF…WAQM), 197-217 (VMFV…IAAI), 254-274 (AYIY…AMVP), and 303-323 (TAMG…VFLV). One can recognise an ABC transmembrane type-1 domain in the interval 95–320 (LRNVALLAAF…AVTLVFAALV (226 aa)). The disordered stretch occupies residues 329–353 (GGEGESKRKAPGSRARRAAAKGGAR). Over residues 337–353 (KAPGSRARRAAAKGGAR) the composition is skewed to basic residues.

The protein belongs to the binding-protein-dependent transport system permease family. In terms of assembly, the complex is composed of two ATP-binding proteins (MsiK), two transmembrane proteins (NgcF and NgcG) and a solute-binding protein (NgcE).

The protein resides in the cell membrane. Functionally, part of the ABC transporter complex NgcEFG-MsiK involved in N,N'-diacetylchitobiose ((GlcNAc)2) uptake. Responsible for the translocation of the substrate across the membrane. This is Diacetylchitobiose uptake system permease protein NgcF from Streptomyces coelicolor (strain ATCC BAA-471 / A3(2) / M145).